A 304-amino-acid chain; its full sequence is MHTAPVEIVRAPTEARNSSTKDIDLLPTADILRLINAEDATVPRAVAEVLPELAKAVDLGVSVLRHGGRIHYFGAGTSGRLATMDAAELPPTFGIARDRVVAHHAGGPSALIHACEGIEDDFSSGRADAATVTSADLAIGLTASGRTPYVAGALDRAREAGARTVLVTADPHSALAADVDVHIGVATGAEVIAGSTRMKAGTAQKLILNAFSTAVMVRLGYTYSNLMVGVVATNAKLRGRMVTILTEATGLSEEDCAEALHRADGDTRIALVCLLTGVDVPTAAHALHAAHGSVRAALRELART.

An SIS domain is found at 60–221 (GVSVLRHGGR…STAVMVRLGY (162 aa)). Glu88 acts as the Proton donor in catalysis. Glu119 is a catalytic residue.

Belongs to the GCKR-like family. MurNAc-6-P etherase subfamily. Homodimer.

It catalyses the reaction N-acetyl-D-muramate 6-phosphate + H2O = N-acetyl-D-glucosamine 6-phosphate + (R)-lactate. Its pathway is amino-sugar metabolism; N-acetylmuramate degradation. Its function is as follows. Specifically catalyzes the cleavage of the D-lactyl ether substituent of MurNAc 6-phosphate, producing GlcNAc 6-phosphate and D-lactate. This Thermobifida fusca (strain YX) protein is N-acetylmuramic acid 6-phosphate etherase.